We begin with the raw amino-acid sequence, 111 residues long: Succinate dehydrogenase assembly factor 1B, mitochondrial (111 aa).

Belongs to the complex I LYR family. SDHAF1 subfamily. As to quaternary structure, interacts with the iron-sulfur protein subunit within the SDH catalytic dimer.

The protein localises to the mitochondrion matrix. Functionally, plays an essential role in the assembly of succinate dehydrogenase (SDH), an enzyme complex (also referred to as respiratory complex II) that is a component of both the tricarboxylic acid (TCA) cycle and the mitochondrial electron transport chain, and which couples the oxidation of succinate to fumarate with the reduction of ubiquinone (coenzyme Q) to ubiquinol. Promotes maturation of the iron-sulfur protein subunit of the SDH catalytic dimer, protecting it from the deleterious effects of oxidants. May act together with SDHAF3. The sequence is that of Succinate dehydrogenase assembly factor 1B, mitochondrial from Dictyostelium discoideum (Social amoeba).